Reading from the N-terminus, the 326-residue chain is tRNA-modifying protein YgfZ (326 aa).

Folate is bound by residues W27 and W189.

The protein belongs to the tRNA-modifying YgfZ family.

It localises to the cytoplasm. Its function is as follows. Folate-binding protein involved in regulating the level of ATP-DnaA and in the modification of some tRNAs. It is probably a key factor in regulatory networks that act via tRNA modification, such as initiation of chromosomal replication. The sequence is that of tRNA-modifying protein YgfZ from Escherichia coli (strain SE11).